The primary structure comprises 244 residues: Carboxy-S-adenosyl-L-methionine synthase (244 aa).

Residues tyrosine 41, 66–68, 91–92, asparagine 134, and arginine 201 each bind S-adenosyl-L-methionine; these read GCS and DN.

Belongs to the class I-like SAM-binding methyltransferase superfamily. Cx-SAM synthase family. Homodimer.

The catalysed reaction is prephenate + S-adenosyl-L-methionine = carboxy-S-adenosyl-L-methionine + 3-phenylpyruvate + H2O. Catalyzes the conversion of S-adenosyl-L-methionine (SAM) to carboxy-S-adenosyl-L-methionine (Cx-SAM). The protein is Carboxy-S-adenosyl-L-methionine synthase of Colwellia psychrerythraea (strain 34H / ATCC BAA-681) (Vibrio psychroerythus).